Reading from the N-terminus, the 277-residue chain is Ribosomal RNA small subunit methyltransferase A (277 aa).

S-adenosyl-L-methionine contacts are provided by Asn26, Leu28, Gly53, Glu74, Asp101, and Asn123.

The protein belongs to the class I-like SAM-binding methyltransferase superfamily. rRNA adenine N(6)-methyltransferase family. RsmA subfamily.

It localises to the cytoplasm. The catalysed reaction is adenosine(1518)/adenosine(1519) in 16S rRNA + 4 S-adenosyl-L-methionine = N(6)-dimethyladenosine(1518)/N(6)-dimethyladenosine(1519) in 16S rRNA + 4 S-adenosyl-L-homocysteine + 4 H(+). Functionally, specifically dimethylates two adjacent adenosines (A1518 and A1519) in the loop of a conserved hairpin near the 3'-end of 16S rRNA in the 30S particle. May play a critical role in biogenesis of 30S subunits. The sequence is that of Ribosomal RNA small subunit methyltransferase A from Opitutus terrae (strain DSM 11246 / JCM 15787 / PB90-1).